Consider the following 226-residue polypeptide: Oxaloacetate tautomerase FAHD2, mitochondrial (226 aa).

The transit peptide at 1–30 (MAAAAQRLLAASTKIVGVGRNFVAHAKELG) directs the protein to the mitochondrion. The Mg(2+) site is built by E69, E71, and D100.

It belongs to the FAH family. Mg(2+) is required as a cofactor. The cofactor is Mn(2+).

It localises to the mitochondrion. It catalyses the reaction oxaloacetate = enol-oxaloacetate. Tautomerase that converts enol-oxaloacetate, a strong inhibitor of succinate dehydrogenase, to the physiological keto form of oxaloacetate. The chain is Oxaloacetate tautomerase FAHD2, mitochondrial from Oryza sativa subsp. japonica (Rice).